The chain runs to 203 residues: Small ribosomal subunit protein uS4 (203 aa).

The segment at 1-46 (MSKRQSAKYKLDRRMGENIWGRPKSPVNRREYGPGQHGQRRKGKMS) is disordered. The S4 RNA-binding domain occupies 94–157 (RRLDAVVYRA…QEMALVAEAQ (64 aa)).

It belongs to the universal ribosomal protein uS4 family. Part of the 30S ribosomal subunit. Contacts protein S5. The interaction surface between S4 and S5 is involved in control of translational fidelity.

Its function is as follows. One of the primary rRNA binding proteins, it binds directly to 16S rRNA where it nucleates assembly of the body of the 30S subunit. Functionally, with S5 and S12 plays an important role in translational accuracy. The polypeptide is Small ribosomal subunit protein uS4 (Sphingopyxis alaskensis (strain DSM 13593 / LMG 18877 / RB2256) (Sphingomonas alaskensis)).